The sequence spans 340 residues: Aurora kinase A- and ninein-interacting protein (340 aa).

The tract at residues 175 to 340 (QREAKRKGEG…DSEGNRVIRH (166 aa)) is interaction with AURKA. Residues 178-190 (AKRKGEGLRESKT) are compositionally biased toward basic and acidic residues. Residues 178-209 (AKRKGEGLRESKTDCPGMGSHIRPPGSKCHQP) form a disordered region. Residues 266–340 (RDSWSQLFTE…DSEGNRVIRH (75 aa)) are interaction with RBBP8/CtIP. A Phosphoserine modification is found at Ser-277. A disordered region spans residues 293 to 317 (DVTNARNQGSGQFPDSPQAQGQDGP). Over residues 296–313 (NARNQGSGQFPDSPQAQG) the composition is skewed to polar residues.

The protein belongs to the AUNIP family. As to quaternary structure, interacts (via C-terminus) with AURKA (via C-terminus). Interacts (via N-terminus) with NIN; this interaction blocks NIN phosphorylation by both AURKA and GSK3B. Identified in a complex with NIN and AURKA. Interacts with RBBP8/CtIP.

It is found in the nucleus. The protein localises to the chromosome. The protein resides in the cytoplasm. Its subcellular location is the cytoskeleton. It localises to the microtubule organizing center. It is found in the centrosome. The protein localises to the spindle pole. Its function is as follows. DNA-binding protein that accumulates at DNA double-strand breaks (DSBs) following DNA damage and promotes DNA resection and homologous recombination. Serves as a sensor of DNA damage: binds DNA with a strong preference for DNA substrates that mimic structures generated at stalled replication forks, and anchors RBBP8/CtIP to DSB sites to promote DNA end resection and ensuing homologous recombination repair. Inhibits non-homologous end joining (NHEJ). Required for the dynamic movement of AURKA at the centrosomes and spindle apparatus during the cell cycle. The chain is Aurora kinase A- and ninein-interacting protein from Mus musculus (Mouse).